The following is a 259-amino-acid chain: Adenosylcobinamide-GDP ribazoletransferase (259 aa).

7 helical membrane-spanning segments follow: residues 41 to 61 (AAIWAAPVAGLLVGLIGAIVF), 67 to 87 (FGLAMGPAAALALVATVIATG), 119 to 139 (IGAYGAMALALSLLIRWNVLS), 148 to 168 (LFALVAAHAASRGVLGAFMHL), 179 to 199 (AGAGAVSLETAIAGAVLGAIP), 200 to 220 (LLLLGAGGAIAALILLGLLFA), and 237 to 257 (TIGALQQVSEIAVLLVASVAL).

This sequence belongs to the CobS family. Mg(2+) serves as cofactor.

The protein localises to the cell inner membrane. It carries out the reaction alpha-ribazole + adenosylcob(III)inamide-GDP = adenosylcob(III)alamin + GMP + H(+). The catalysed reaction is alpha-ribazole 5'-phosphate + adenosylcob(III)inamide-GDP = adenosylcob(III)alamin 5'-phosphate + GMP + H(+). It participates in cofactor biosynthesis; adenosylcobalamin biosynthesis; adenosylcobalamin from cob(II)yrinate a,c-diamide: step 7/7. Joins adenosylcobinamide-GDP and alpha-ribazole to generate adenosylcobalamin (Ado-cobalamin). Also synthesizes adenosylcobalamin 5'-phosphate from adenosylcobinamide-GDP and alpha-ribazole 5'-phosphate. The protein is Adenosylcobinamide-GDP ribazoletransferase of Mesorhizobium japonicum (strain LMG 29417 / CECT 9101 / MAFF 303099) (Mesorhizobium loti (strain MAFF 303099)).